Here is a 1098-residue protein sequence, read N- to C-terminus: Tudor domain-containing protein 7 (1098 aa).

HTH OST-type domains follow at residues 3–76 (EGDL…YAMA) and 233–302 (KMDE…YPAK). The residue at position 319 (Ser319) is a Phosphoserine. Positions 337–406 (MAGDFKEKVA…PQKAILYAKL (70 aa)) constitute an HTH OST-type 3 domain. 2 consecutive Tudor domains span residues 513-570 (AVNV…FCSL) and 703-760 (LPFC…FLQE). At Ser859 the chain carries Phosphoserine. Residues 861 to 1098 (NSKNGNMRVS…EYLIELSKVN (238 aa)) are interaction with CDK17. Positions 893-1098 (TSSFSTEELP…EYLIELSKVN (206 aa)) are interaction with CABLES1.

Belongs to the TDRD7 family. In terms of assembly, found in a mRNP complex, at least composed of TDRD1, TDRD6, TDRD7 and DDX4. Found in a complex containing CABLES1, CDK16 and CDK17. Interacts with CABLES1, CDK17 and PIWIL1.

It is found in the cytoplasm. In terms of biological role, component of specific cytoplasmic RNA granules involved in post-transcriptional regulation of specific genes: probably acts by binding to specific mRNAs and regulating their translation. Required for lens transparency during lens development, by regulating translation of genes such as CRYBB3 and HSPB1 in the developing lens. Also required during spermatogenesis. The protein is Tudor domain-containing protein 7 (TDRD7) of Pongo abelii (Sumatran orangutan).